The following is a 118-amino-acid chain: Small ribosomal subunit protein uS13 (118 aa).

The disordered stretch occupies residues 91-118; sequence HRRGLPVRGQRTKTNARTRKGPRKPIKK.

Belongs to the universal ribosomal protein uS13 family. As to quaternary structure, part of the 30S ribosomal subunit. Forms a loose heterodimer with protein S19. Forms two bridges to the 50S subunit in the 70S ribosome.

In terms of biological role, located at the top of the head of the 30S subunit, it contacts several helices of the 16S rRNA. In the 70S ribosome it contacts the 23S rRNA (bridge B1a) and protein L5 of the 50S subunit (bridge B1b), connecting the 2 subunits; these bridges are implicated in subunit movement. Contacts the tRNAs in the A and P-sites. This is Small ribosomal subunit protein uS13 from Pectobacterium atrosepticum (strain SCRI 1043 / ATCC BAA-672) (Erwinia carotovora subsp. atroseptica).